We begin with the raw amino-acid sequence, 176 residues long: NADH-dependent flavin reductase (176 aa).

FAD-binding positions include 39–46 (EDSVHGMT) and 48–49 (NA). Residue S52 participates in NAD(+) binding. Residues 63–65 (SIS), 69–70 (KM), and 95–96 (HF) contribute to the FAD site. NAD(+) contacts are provided by residues H137 and 157–160 (FYTG).

This sequence belongs to the non-flavoprotein flavin reductase family. In terms of assembly, homodimer. 4-nitrophenol 2-monooxygenase complex consists of an oxygenase component NphA1 and a flavin reductase component NphA2.

The catalysed reaction is a reduced flavin + NAD(+) = an oxidized flavin + NADH + 2 H(+). In terms of biological role, catalyzes the reduction of FAD with the concomitant oxidation of NADH. NAD is the physiological electron donor. Subsequently, the reduced flavins diffuse to the oxygenase component NphA2. The chain is NADH-dependent flavin reductase (nphA2) from Rhodococcus sp.